Reading from the N-terminus, the 1137-residue chain is MSNNINANNLNTDSSSSPVNVPKMDALIIPVTMEVPCDSRGQRMWWAFLASSMVTFFGGLFIILLWRTLKYLWTVCCHCGVKNKEAQKINGGGDTQADGACKPTDEKEENVAAEVGWMTSVKDWAGVMISAQTLTGRVLVVLVFALSIGALVIYFIDSSNPIESCQNFYKDFTLQIDMAFNVFFLLYFGLRFIAANDKLWFWLEVNSVVDFFTVPPVFVSVYLNRSWLGLRFLRALRLIQFSEILQFLNILKTSNSIKLVNLCSIFISTWLTAAGFIHLVENSGDPWENFQNNQQLTYWECVYLLMVTMSTVGYGDVYAKTTLGRLFMVFFILGGLAMFASYVPEIIELIGNRKKYGGSYSAVSGRKHIVVCGHITLESVSNFLKDFLHKDRDDVNVEIVFLHNISPNLELEALFKRHFTQVEFYQGSVLNPHDLARVKIESADACLILANKYCADPDAEDASNIMRVISIKNYHPKIRIITQMLQYHNKAHLLNIPSWNWKEGDDAICLAELKLGFIAQSCLAPGLSTMLANLFSMRSFIKIEEDTWQKYYLEGVANEMYTEYLSSAFVGLSFPAVCELVFAKLKLLMIAIEYKSEKRESSILINPGNHVKIQEGTLGFFIASDAKEVKRAFFYCKACHDDITDPKRIKKCGCKRLEDEQPSTLSPKKKQRNGGMRNSPNSSPKLMRHDPLLIPGNEQIDNMDANVKKYDSTGMFHWCPAKDIEKVILTRSEAAMTVLSGHVVVCIFGDVKSALIGLRNLVMPLRASNFHYHELKHIVFVGSLEYLRREWETLHNFPKVSILPGTPLSRADLRAVNINLCDMCVILSANQNNIDDASLQDKECILASLNIKSMQFDDSIGVLQANSQGFTPPGMDRSSPDNSPVHGLLRQPSITTGANIPIITELVNDSNVQFLDQDDDDDPDTELYLTQPFACGTAFAVSVLDSLMSATYFNDNILTLIRTLVTGGATPELEALIAEENALRGGYSTPQTLANRDRCRVAQLALYDGPFADLGDGGCYGDLFCKALKTYNMLCFGIYRLRDAHLSTPSQCTKRYVITNPPYEFELVPTDLIFCLMQFDHNAGQSRASLSHSSHSSYSSSKKSSSVHSIPSTANRPNRTKTRDSREKQKYVQEDRL.

Residues 1 to 44 (MSNNINANNLNTDSSSSPVNVPKMDALIIPVTMEVPCDSRGQRM) are Extracellular-facing. Residues 45–65 (WWAFLASSMVTFFGGLFIILL) form a helical membrane-spanning segment. The Cytoplasmic portion of the chain corresponds to 66-137 (WRTLKYLWTV…MISAQTLTGR (72 aa)). Residues 138–158 (VLVVLVFALSIGALVIYFIDS) form a helical membrane-spanning segment. At 159-173 (SNPIESCQNFYKDFT) the chain is on the extracellular side. Residues 174 to 194 (LQIDMAFNVFFLLYFGLRFIA) traverse the membrane as a helical segment. Topologically, residues 195–198 (ANDK) are cytoplasmic. Residues 199-219 (LWFWLEVNSVVDFFTVPPVFV) traverse the membrane as a helical segment. Over 220–223 (SVYL) the chain is Extracellular. The helical; Voltage-sensor transmembrane segment at 224-244 (NRSWLGLRFLRALRLIQFSEI) threads the bilayer. At 245–259 (LQFLNILKTSNSIKL) the chain is on the cytoplasmic side. A helical membrane pass occupies residues 260–280 (VNLCSIFISTWLTAAGFIHLV). Over 281 to 294 (ENSGDPWENFQNNQ) the chain is Extracellular. Positions 295–317 (QLTYWECVYLLMVTMSTVGYGDV) form an intramembrane region, pore-forming. Positions 311–314 (TVGY) match the Selectivity for potassium motif. The Extracellular portion of the chain corresponds to 318–326 (YAKTTLGRL). The helical transmembrane segment at 327–347 (FMVFFILGGLAMFASYVPEII) threads the bilayer. The Cytoplasmic segment spans residues 348–1137 (ELIGNRKKYG…KQKYVQEDRL (790 aa)). One can recognise an RCK N-terminal 1 domain in the interval 366 to 508 (RKHIVVCGHI…WNWKEGDDAI (143 aa)). Residues glutamate 398, glutamine 421, and glutamate 423 each contribute to the Mg(2+) site. The segment at 515–535 (LGFIAQSCLAPGLSTMLANLF) is segment S7. The segment at 572–592 (LSFPAVCELVFAKLKLLMIAI) is segment S8. Residues 636–640 (CKACH) are heme-binding motif. Residues 660–688 (EQPSTLSPKKKQRNGGMRNSPNSSPKLMR) are disordered. The segment S9 stretch occupies residues 738–758 (VLSGHVVVCIFGDVKSALIGL). One can recognise an RCK N-terminal 2 domain in the interval 740–884 (SGHVVVCIFG…MDRSSPDNSP (145 aa)). A Calcium bowl motif is present at residues 904–926 (TELVNDSNVQFLDQDDDDDPDTE). Positions 913, 916, 919, and 921 each coordinate Ca(2+). Residues 933-953 (FACGTAFAVSVLDSLMSATYF) are segment S10. Residues 1088–1112 (ASLSHSSHSSYSSSKKSSSVHSIPS) show a composition bias toward low complexity. The segment at 1088–1137 (ASLSHSSHSSYSSSKKSSSVHSIPSTANRPNRTKTRDSREKQKYVQEDRL) is disordered. A compositionally biased stretch (basic and acidic residues) spans 1121-1137 (KTRDSREKQKYVQEDRL).

This sequence belongs to the potassium channel family. Calcium-activated (TC 1.A.1.3) subfamily. KCa1.1/KCNMA1 sub-subfamily. Homotetramer; which constitutes the calcium-activated potassium channel.

The protein resides in the cell membrane. It catalyses the reaction K(+)(in) = K(+)(out). With respect to regulation, ethanol and carbon monoxide-bound heme increase channel activation. Heme inhibits channel activation. Functionally, potassium channel activated by both membrane depolarization or increase in cytosolic Ca(2+) that mediates export of K(+). It is also activated by the concentration of cytosolic Mg(2+). Its activation dampens the excitatory events that elevate the cytosolic Ca(2+) concentration and/or depolarize the cell membrane. It therefore contributes to repolarization of the membrane potential. Plays a key role in controlling excitability in a number of systems, such as regulation of the contraction of smooth muscle, the tuning of hair cells in the cochlea, regulation of transmitter release, and innate immunity. In smooth muscles, its activation by high level of Ca(2+), caused by ryanodine receptors in the sarcoplasmic reticulum, regulates the membrane potential. In cochlea cells, its number and kinetic properties partly determine the characteristic frequency of each hair cell and thereby helps to establish a tonotopic map. Highly sensitive to both iberiotoxin (IbTx) and charybdotoxin (CTX). The chain is Calcium-activated potassium channel subunit alpha-1 (KCNMA1) from Gallus gallus (Chicken).